Consider the following 1238-residue polypeptide: Cullin-associated NEDD8-dissociated protein 1 (1238 aa).

HEAT repeat units follow at residues 41-78, 126-167, 171-208, 210-247, and 251-292; these read TYEN…RVKD, LVIK…KYGS, GDLE…PSPD, LFNS…SSGY, and KYLP…KCQK. Residues 315-354 are disordered; that stretch reads YSDDGEGEEDGDEEEEEMETSGDNDEEQEEEEEEEDLSDD. HEAT repeat units follow at residues 382 to 419, 432 to 469, 603 to 641, 646 to 683, 688 to 725, 853 to 890, 933 to 966, 967 to 1004, and 1008 to 1045; these read ELYQ…QLNK, QQVP…IIPG, EIQS…SSIN, SILP…VCPN, SLLT…NYSE, HENE…CSLQ, PFLQ…KLSM, IEPN…ENKE, and QYLA…NKPN.

This sequence belongs to the CAND family.

The protein localises to the nucleus. Its function is as follows. Key assembly factor of SCF (SKP1-CUL1-F-box protein) E3 ubiquitin ligase complexes that promotes the exchange of the substrate-recognition F-box subunit in SCF complexes, thereby playing a key role in the cellular repertoire of SCF complexes. Acts as a F-box protein exchange factor. This Dictyostelium discoideum (Social amoeba) protein is Cullin-associated NEDD8-dissociated protein 1 (cand1).